Reading from the N-terminus, the 330-residue chain is Anthranilate phosphoribosyltransferase (330 aa).

5-phospho-alpha-D-ribose 1-diphosphate is bound by residues glycine 75, 78-79 (GD), threonine 83, 85-88 (NVST), 103-111 (KHGNRAASS), and alanine 115. Glycine 75 lines the anthranilate pocket. Serine 87 serves as a coordination point for Mg(2+). Asparagine 106 contacts anthranilate. Arginine 161 serves as a coordination point for anthranilate. The Mg(2+) site is built by aspartate 220 and glutamate 221.

It belongs to the anthranilate phosphoribosyltransferase family. In terms of assembly, homodimer. It depends on Mg(2+) as a cofactor.

It catalyses the reaction N-(5-phospho-beta-D-ribosyl)anthranilate + diphosphate = 5-phospho-alpha-D-ribose 1-diphosphate + anthranilate. The protein operates within amino-acid biosynthesis; L-tryptophan biosynthesis; L-tryptophan from chorismate: step 2/5. Its function is as follows. Catalyzes the transfer of the phosphoribosyl group of 5-phosphorylribose-1-pyrophosphate (PRPP) to anthranilate to yield N-(5'-phosphoribosyl)-anthranilate (PRA). This is Anthranilate phosphoribosyltransferase from Novosphingobium aromaticivorans (strain ATCC 700278 / DSM 12444 / CCUG 56034 / CIP 105152 / NBRC 16084 / F199).